The primary structure comprises 303 residues: Sulfate adenylyltransferase subunit 2 (303 aa).

This sequence belongs to the PAPS reductase family. CysD subfamily. Heterodimer composed of CysD, the smaller subunit, and CysN.

The enzyme catalyses sulfate + ATP + H(+) = adenosine 5'-phosphosulfate + diphosphate. The protein operates within sulfur metabolism; hydrogen sulfide biosynthesis; sulfite from sulfate: step 1/3. Functionally, with CysN forms the ATP sulfurylase (ATPS) that catalyzes the adenylation of sulfate producing adenosine 5'-phosphosulfate (APS) and diphosphate, the first enzymatic step in sulfur assimilation pathway. APS synthesis involves the formation of a high-energy phosphoric-sulfuric acid anhydride bond driven by GTP hydrolysis by CysN coupled to ATP hydrolysis by CysD. The sequence is that of Sulfate adenylyltransferase subunit 2 from Phocaeicola vulgatus (strain ATCC 8482 / DSM 1447 / JCM 5826 / CCUG 4940 / NBRC 14291 / NCTC 11154) (Bacteroides vulgatus).